A 457-amino-acid chain; its full sequence is D-hydantoinase (457 aa).

Residues H57 and H59 each coordinate Zn(2+). Phosphoserine is present on S69. K148 is a Zn(2+) binding site. Residue K148 is modified to N6-carboxylysine. Y153 serves as a coordination point for substrate. 2 residues coordinate Zn(2+): H181 and H237. T286 contributes to the substrate binding site. A Zn(2+)-binding site is contributed by D313. Position 335 (N335) interacts with substrate.

This sequence belongs to the metallo-dependent hydrolases superfamily. Hydantoinase/dihydropyrimidinase family. Homodimer and homotetramer. It depends on Zn(2+) as a cofactor. Post-translationally, carboxylation allows a single lysine to coordinate two zinc ions.

Catalyzes the stereospecific hydrolysis of the cyclic amide bond of D-hydantoin derivatives. This Ralstonia pickettii (Burkholderia pickettii) protein is D-hydantoinase (hyuA).